Consider the following 249-residue polypeptide: Ubiquinone/menaquinone biosynthesis C-methyltransferase UbiE (249 aa).

S-adenosyl-L-methionine is bound by residues threonine 72, aspartate 93, and 121–122 (DA).

The protein belongs to the class I-like SAM-binding methyltransferase superfamily. MenG/UbiE family.

It catalyses the reaction a 2-demethylmenaquinol + S-adenosyl-L-methionine = a menaquinol + S-adenosyl-L-homocysteine + H(+). It carries out the reaction a 2-methoxy-6-(all-trans-polyprenyl)benzene-1,4-diol + S-adenosyl-L-methionine = a 5-methoxy-2-methyl-3-(all-trans-polyprenyl)benzene-1,4-diol + S-adenosyl-L-homocysteine + H(+). Its pathway is quinol/quinone metabolism; menaquinone biosynthesis; menaquinol from 1,4-dihydroxy-2-naphthoate: step 2/2. The protein operates within cofactor biosynthesis; ubiquinone biosynthesis. Its function is as follows. Methyltransferase required for the conversion of demethylmenaquinol (DMKH2) to menaquinol (MKH2) and the conversion of 2-polyprenyl-6-methoxy-1,4-benzoquinol (DDMQH2) to 2-polyprenyl-3-methyl-6-methoxy-1,4-benzoquinol (DMQH2). This chain is Ubiquinone/menaquinone biosynthesis C-methyltransferase UbiE, found in Cellvibrio japonicus (strain Ueda107) (Pseudomonas fluorescens subsp. cellulosa).